The following is a 935-amino-acid chain: Transmembrane channel-like protein 1 (935 aa).

Disordered stretches follow at residues 1-21 and 37-204; these read MPRH…DEGK and ERGK…LGSL. 5 stretches are compositionally biased toward basic and acidic residues: residues 37–47, 54–79, 109–136, 152–163, and 172–184; these read ERGKIKQASRD, RNGE…EKKH, DKSS…EKDV, NHEKTKQHLKEE, and PETT…KSES. 10 helical membrane passes run 303 to 340, 392 to 423, 480 to 510, 523 to 550, 555 to 589, 633 to 670, 690 to 710, 714 to 736, 751 to 774, and 818 to 851; these read SSVA…MGKP, RMPL…ANEE, LTRF…VRRS, WWER…ISTL, PRIA…QLKR, WETM…VRFL, VSGN…GAFY, LPAL…VMCC, NFYM…TIVS, and LVLP…KKKL. A compositionally biased stretch (basic and acidic residues) spans 874 to 886; that stretch reads EQARKAGEQRRNS. The interval 874–935 is disordered; sequence EQARKAGEQR…QQPQKNSKKR (62 aa). 2 stretches are compositionally biased toward polar residues: residues 899 to 919 and 926 to 935; these read SHVS…TSSG and QQPQKNSKKR.

Belongs to the TMC family. In terms of assembly, interacts specifically with isoform CD3 of PCDH15A (via cytoplasmic domain). In terms of tissue distribution, in adults, expression is restricted to the hair cells of inner ear and lateral line organ. Expressed at higher levels in the larval lateral-line neuromasts than in the larval inner ear. Expressed in the sensory hair cell patches of the ear at 4 days post fertilization (dpf).

The protein localises to the cell membrane. The catalysed reaction is Ca(2+)(in) = Ca(2+)(out). Its function is as follows. Pore-forming subunit of the mechanotransducer (MET) non-selective cation channel complex located at the tips of hair-cell stereocilia. Highly permeable to calcium and likely transports monovalent cations. The protein is Transmembrane channel-like protein 1 of Danio rerio (Zebrafish).